A 145-amino-acid polypeptide reads, in one-letter code: Bacilliredoxin MW1318 (145 aa).

It belongs to the bacilliredoxin family.

The protein is Bacilliredoxin MW1318 of Staphylococcus aureus (strain MW2).